The chain runs to 406 residues: Bifunctional enzyme Fae/Hps (406 aa).

The segment at 1 to 164 (MSDIYEIGEA…AEKDRGTHPI (164 aa)) is formaldehyde-activating enzyme. Catalysis depends on histidine 20, which acts as the Proton donor. Aspartate 22, leucine 51, lysine 69, threonine 71, and glutamine 86 together coordinate substrate. The interval 165 to 406 (MGFKAMKLWN…RLALDEDEKI (242 aa)) is 3-hexulose-6-phosphate synthase.

The protein in the N-terminal section; belongs to the formaldehyde-activating enzyme family. It in the C-terminal section; belongs to the HPS/KGPDC family. HPS subfamily.

It catalyses the reaction 5,6,7,8-tetrahydromethanopterin + formaldehyde = 5,10-methylenetetrahydromethanopterin + H2O. The enzyme catalyses D-ribulose 5-phosphate + formaldehyde = D-arabino-hex-3-ulose 6-phosphate. It functions in the pathway carbohydrate biosynthesis; D-ribose 5-phosphate biosynthesis. Functionally, catalyzes the condensation of formaldehyde with tetrahydromethanopterin (H(4)MPT) to 5,10-methylenetetrahydromethanopterin. In terms of biological role, catalyzes the reversible formation of ribulose-5-phosphate and formaldehyde from 3-hexulose-6-phosphate. This is Bifunctional enzyme Fae/Hps from Methanosphaera stadtmanae (strain ATCC 43021 / DSM 3091 / JCM 11832 / MCB-3).